Here is a 582-residue protein sequence, read N- to C-terminus: ATP-dependent lipid A-core flippase (582 aa).

5 consecutive transmembrane segments (helical) span residues 16–36 (LWPM…ALIL), 63–83 (ILVW…VSGF), 153–173 (IIGL…ILVV), 253–273 (PLIQ…ASFP), and 275–295 (VMET…IALM). An ABC transmembrane type-1 domain is found at 28–310 (IVAAIALILN…LTNVNAQFQR (283 aa)). One can recognise an ABC transporter domain in the interval 342-578 (IAFDHVTFSY…QGVYAQLHQL (237 aa)). 376-383 (GRSGSGKS) serves as a coordination point for ATP.

This sequence belongs to the ABC transporter superfamily. Lipid exporter (TC 3.A.1.106) family. Homodimer.

It is found in the cell inner membrane. It carries out the reaction ATP + H2O + lipid A-core oligosaccharideSide 1 = ADP + phosphate + lipid A-core oligosaccharideSide 2.. Involved in lipopolysaccharide (LPS) biosynthesis. Translocates lipid A-core from the inner to the outer leaflet of the inner membrane. Transmembrane domains (TMD) form a pore in the inner membrane and the ATP-binding domain (NBD) is responsible for energy generation. This is ATP-dependent lipid A-core flippase from Sodalis glossinidius (strain morsitans).